A 772-amino-acid chain; its full sequence is PDZ domain-containing protein 4 (772 aa).

In terms of domain architecture, PDZ spans 136-221 (EVELCKNSHQ…NISLLVARPE (86 aa)). The interval 239-320 (DFGSENEGDL…TNTPGSLRKF (82 aa)) is disordered. A Phosphoserine modification is found at Ser-242. Residues 287 to 303 (RTDESTRNEESSEHDLL) are compositionally biased toward basic and acidic residues. Residues 394–424 (VNRNESLGHEMAMLEEELRHLEFKCRNILRA) adopt a coiled-coil conformation. The disordered stretch occupies residues 450–573 (ASEPKKHELS…VGPEGSPYLS (124 aa)). Over residues 452 to 472 (EPKKHELSDISELPEKSDKDS) the composition is skewed to basic and acidic residues. Position 459 is a phosphoserine (Ser-459). Polar residues-rich tracts occupy residues 473–484 (TSAYNTGESCRS) and 502–511 (AGNSNLNRTP). Basic and acidic residues predominate over residues 535 to 552 (LSRDPEVGRRQHTEERVR).

The protein localises to the cytoplasm. It localises to the cell cortex. The polypeptide is PDZ domain-containing protein 4 (Pdzd4) (Mus musculus (Mouse)).